A 437-amino-acid polypeptide reads, in one-letter code: Serine hydroxymethyltransferase (437 aa).

(6S)-5,6,7,8-tetrahydrofolate is bound by residues L130 and 134–136 (GHL). The residue at position 239 (K239) is an N6-(pyridoxal phosphate)lysine.

Belongs to the SHMT family. As to quaternary structure, homodimer. Pyridoxal 5'-phosphate serves as cofactor.

It is found in the cytoplasm. It catalyses the reaction (6R)-5,10-methylene-5,6,7,8-tetrahydrofolate + glycine + H2O = (6S)-5,6,7,8-tetrahydrofolate + L-serine. The protein operates within one-carbon metabolism; tetrahydrofolate interconversion. Its pathway is amino-acid biosynthesis; glycine biosynthesis; glycine from L-serine: step 1/1. Its function is as follows. Catalyzes the reversible interconversion of serine and glycine with tetrahydrofolate (THF) serving as the one-carbon carrier. This reaction serves as the major source of one-carbon groups required for the biosynthesis of purines, thymidylate, methionine, and other important biomolecules. Also exhibits THF-independent aldolase activity toward beta-hydroxyamino acids, producing glycine and aldehydes, via a retro-aldol mechanism. This is Serine hydroxymethyltransferase from Bartonella quintana (strain Toulouse) (Rochalimaea quintana).